The chain runs to 277 residues: 3-methyl-2-oxobutanoate hydroxymethyltransferase (277 aa).

Mg(2+) contacts are provided by aspartate 43 and aspartate 82. Residues 43-44 (DS), aspartate 82, and lysine 112 each bind 3-methyl-2-oxobutanoate. Glutamate 114 lines the Mg(2+) pocket. Glutamate 181 (proton acceptor) is an active-site residue.

Belongs to the PanB family. As to quaternary structure, homodecamer; pentamer of dimers. It depends on Mg(2+) as a cofactor.

Its subcellular location is the cytoplasm. The enzyme catalyses 3-methyl-2-oxobutanoate + (6R)-5,10-methylene-5,6,7,8-tetrahydrofolate + H2O = 2-dehydropantoate + (6S)-5,6,7,8-tetrahydrofolate. It participates in cofactor biosynthesis; (R)-pantothenate biosynthesis; (R)-pantoate from 3-methyl-2-oxobutanoate: step 1/2. In terms of biological role, catalyzes the reversible reaction in which hydroxymethyl group from 5,10-methylenetetrahydrofolate is transferred onto alpha-ketoisovalerate to form ketopantoate. The chain is 3-methyl-2-oxobutanoate hydroxymethyltransferase from Bacillus licheniformis (strain ATCC 14580 / DSM 13 / JCM 2505 / CCUG 7422 / NBRC 12200 / NCIMB 9375 / NCTC 10341 / NRRL NRS-1264 / Gibson 46).